Here is a 185-residue protein sequence, read N- to C-terminus: Elongation factor P (185 aa).

This sequence belongs to the elongation factor P family.

The protein localises to the cytoplasm. It functions in the pathway protein biosynthesis; polypeptide chain elongation. Involved in peptide bond synthesis. Stimulates efficient translation and peptide-bond synthesis on native or reconstituted 70S ribosomes in vitro. Probably functions indirectly by altering the affinity of the ribosome for aminoacyl-tRNA, thus increasing their reactivity as acceptors for peptidyl transferase. The chain is Elongation factor P from Bacillus cereus (strain B4264).